We begin with the raw amino-acid sequence, 723 residues long: Probable alpha-fucosidase A (723 aa).

A signal peptide spans 1 to 15 (MRSLVLLGMSSLATA). Residues asparagine 77, asparagine 98, asparagine 117, asparagine 171, asparagine 194, asparagine 243, asparagine 334, asparagine 558, asparagine 566, and asparagine 595 are each glycosylated (N-linked (GlcNAc...) asparagine).

Belongs to the glycosyl hydrolase 95 family.

It localises to the secreted. The enzyme catalyses an alpha-L-fucoside + H2O = L-fucose + an alcohol. Its function is as follows. Alpha-fucosidase involved in degradation of fucosylated xyloglucans. Hydrolyzes alpha-1,2-linked fucose. The chain is Probable alpha-fucosidase A (afcA) from Aspergillus oryzae (strain ATCC 42149 / RIB 40) (Yellow koji mold).